Consider the following 54-residue polypeptide: ATP synthase F(0) complex subunit 8 (54 aa).

The chain crosses the membrane as a helical span at residues 4–24; it reads LNPGPWFAILVFSWLIFLTII. Positions 35–54 are disordered; that stretch reads NEPTPVSAEKHKTESWDWPW. The span at 42–54 shows a compositional bias: basic and acidic residues; it reads AEKHKTESWDWPW.

This sequence belongs to the ATPase protein 8 family. In terms of assembly, component of the ATP synthase complex composed at least of ATP5F1A/subunit alpha, ATP5F1B/subunit beta, ATP5MC1/subunit c (homooctomer), MT-ATP6/subunit a, MT-ATP8/subunit 8, ATP5ME/subunit e, ATP5MF/subunit f, ATP5MG/subunit g, ATP5MK/subunit k, ATP5MJ/subunit j, ATP5F1C/subunit gamma, ATP5F1D/subunit delta, ATP5F1E/subunit epsilon, ATP5PF/subunit F6, ATP5PB/subunit b, ATP5PD/subunit d, ATP5PO/subunit OSCP. ATP synthase complex consists of a soluble F(1) head domain (subunits alpha(3) and beta(3)) - the catalytic core - and a membrane F(0) domain - the membrane proton channel (subunits c, a, 8, e, f, g, k and j). These two domains are linked by a central stalk (subunits gamma, delta, and epsilon) rotating inside the F1 region and a stationary peripheral stalk (subunits F6, b, d, and OSCP).

It is found in the mitochondrion membrane. In terms of biological role, subunit 8, of the mitochondrial membrane ATP synthase complex (F(1)F(0) ATP synthase or Complex V) that produces ATP from ADP in the presence of a proton gradient across the membrane which is generated by electron transport complexes of the respiratory chain. ATP synthase complex consist of a soluble F(1) head domain - the catalytic core - and a membrane F(1) domain - the membrane proton channel. These two domains are linked by a central stalk rotating inside the F(1) region and a stationary peripheral stalk. During catalysis, ATP synthesis in the catalytic domain of F(1) is coupled via a rotary mechanism of the central stalk subunits to proton translocation. In vivo, can only synthesize ATP although its ATP hydrolase activity can be activated artificially in vitro. Part of the complex F(0) domain. This Cyprinus carpio (Common carp) protein is ATP synthase F(0) complex subunit 8.